We begin with the raw amino-acid sequence, 530 residues long: Calnexin homolog 1 (530 aa).

Positions 1–20 are cleaved as a signal peptide; sequence MRQRQLFSVFLLLLAFVSFQ. Topologically, residues 21-466 are lumenal; the sequence is KLCYCDDQTV…EKAEQQPNLT (446 aa). Residues S34 and D65 each coordinate Ca(2+). Residues C108 and C143 are joined by a disulfide bond. 4 residues coordinate an alpha-D-glucoside: Y112, K114, Y134, and D141. Residues 216–315 are disordered; the sequence is ALIPAKTIPD…KCEAAPGCGE (100 aa). The interval 223–356 is p domain (Extended arm); that stretch reads IPDPEDKKPE…RDIPNPDYFE (134 aa). A compositionally biased stretch (basic and acidic residues) spans 224-240; that stretch reads PDPEDKKPEDWDERAKI. 5 consecutive repeat copies span residues 225 to 236, 242 to 253, 261 to 272, 280 to 291, and 295 to 305. 2 4 X approximate repeats regions span residues 225-291 and 295-352; these read DPED…DWDD and GMWE…IPNP. Positions 250–281 are enriched in acidic residues; it reads DWDEDAPMEIEDEEAEKPEGWLDDEPEEVDDP. C307 and C313 form a disulfide bridge. A run of 3 repeats spans residues 314 to 324, 328 to 338, and 342 to 352. E371 serves as a coordination point for an alpha-D-glucoside. Ca(2+) is bound at residue D382. N-linked (GlcNAc...) asparagine glycosylation is present at N464. A helical membrane pass occupies residues 467–487; that stretch reads IGVLVAIVVVFFSLFLKLIFG. Residues 488 to 530 lie on the Cytoplasmic side of the membrane; it reads GKKAAAPVEKKKPEVAESSKSGDEAEKKEETAAPRKRQPRRDN. The segment at 490–530 is disordered; sequence KAAAPVEKKKPEVAESSKSGDEAEKKEETAAPRKRQPRRDN. Positions 495–520 are enriched in basic and acidic residues; that stretch reads VEKKKPEVAESSKSGDEAEKKEETAA. A Phosphoserine modification is found at S508. Basic residues predominate over residues 521-530; sequence PRKRQPRRDN.

Belongs to the calreticulin family.

Its subcellular location is the endoplasmic reticulum membrane. In terms of biological role, calcium-binding protein that interacts with newly synthesized monoglucosylated glycoproteins in the endoplasmic reticulum. It may act in assisting protein assembly and/or in the retention within the ER of unassembled protein subunits. It seems to play a major role in the quality control apparatus of the ER by the retention of incorrectly folded proteins. This is Calnexin homolog 1 (CNX1) from Arabidopsis thaliana (Mouse-ear cress).